Consider the following 536-residue polypeptide: Adenine deaminase (536 aa).

The interval 1 to 24 is disordered; that stretch reads MTPSPHDLLHCGMNSQDRDETNGD.

This sequence belongs to the metallo-dependent hydrolases superfamily. Adenine deaminase family. Mn(2+) serves as cofactor.

It catalyses the reaction adenine + H2O + H(+) = hypoxanthine + NH4(+). The polypeptide is Adenine deaminase (Deinococcus radiodurans (strain ATCC 13939 / DSM 20539 / JCM 16871 / CCUG 27074 / LMG 4051 / NBRC 15346 / NCIMB 9279 / VKM B-1422 / R1)).